Here is a 63-residue protein sequence, read N- to C-terminus: Adipokinetic prohormone type 1 (63 aa).

An N-terminal signal peptide occupies residues 1 to 22 (MVQRCLVVALLVVVVAAALCSA). Glutamine 23 carries the post-translational modification Pyrrolidone carboxylic acid. The residue at position 32 (threonine 32) is a Threonine amide.

Belongs to the AKH/HRTH/RPCH family. Adipokinetic hormone precursor-related peptide (APRP) can form three type of disulfide-bond dimers: p1 (alpha-alpha), p2 (alpha-beta), and p3 (beta-beta).

The protein resides in the secreted. In terms of biological role, this hormone, released from cells in the corpora cardiaca, causes release of diglycerides from the fat body and stimulation of muscles to use these diglycerides as an energy source during energy-demanding processes. The chain is Adipokinetic prohormone type 1 from Schistocerca gregaria (Desert locust).